The following is a 211-amino-acid chain: N-(5'-phosphoribosyl)anthranilate isomerase (211 aa).

The protein belongs to the TrpF family.

The catalysed reaction is N-(5-phospho-beta-D-ribosyl)anthranilate = 1-(2-carboxyphenylamino)-1-deoxy-D-ribulose 5-phosphate. Its pathway is amino-acid biosynthesis; L-tryptophan biosynthesis; L-tryptophan from chorismate: step 3/5. This is N-(5'-phosphoribosyl)anthranilate isomerase from Desulfovibrio desulfuricans (strain ATCC 27774 / DSM 6949 / MB).